Here is a 416-residue protein sequence, read N- to C-terminus: Nonsense-mediated decay protein 4 (416 aa).

Disordered stretches follow at residues 1 to 21 (MSLYPYNSDEDEARKNSNYHD), 195 to 218 (QHPIPQGESLESHNSFDETNYNNS), and 356 to 393 (DRPSKSKNKNKNKNTKKSTKPKQINGVVSDGCTGANGD). The segment covering 12 to 21 (EARKNSNYHD) has biased composition (basic and acidic residues). Positions 360–375 (KSKNKNKNKNTKKSTK) are enriched in basic residues.

The protein resides in the cytoplasm. Involved in nonsense-mediated decay of mRNAs containing premature stop codons. The sequence is that of Nonsense-mediated decay protein 4 (NMD4) from Debaryomyces hansenii (strain ATCC 36239 / CBS 767 / BCRC 21394 / JCM 1990 / NBRC 0083 / IGC 2968) (Yeast).